Here is a 185-residue protein sequence, read N- to C-terminus: Small ribosomal subunit protein uS4c (185 aa).

The S4 RNA-binding domain occupies 72–134 (MRLDNVIFRL…PTSCNALKGE (63 aa)). Residues 132–154 (KGESPGGGETPDHLTASLSEGSR) are disordered.

Belongs to the universal ribosomal protein uS4 family. As to quaternary structure, part of the 30S ribosomal subunit. Contacts protein S5. The interaction surface between S4 and S5 is involved in control of translational fidelity.

Its subcellular location is the plastid. The protein localises to the chloroplast. Functionally, one of the primary rRNA binding proteins, it binds directly to 16S rRNA where it nucleates assembly of the body of the 30S subunit. In terms of biological role, with S5 and S12 plays an important role in translational accuracy. The sequence is that of Small ribosomal subunit protein uS4c (rps4) from Woodwardia radicans (Rooting chainfern).